The primary structure comprises 734 residues: 5-methyltetrahydropteroyltriglutamate--homocysteine methyltransferase (734 aa).

Residues 15–18 (REFK) and Lys-104 contribute to the 5-methyltetrahydropteroyltri-L-glutamate site. Residues 409–411 (IGS) and Glu-462 each bind L-homocysteine. L-methionine contacts are provided by residues 409-411 (IGS) and Glu-462. Residues 493-494 (RC) and Trp-539 contribute to the 5-methyltetrahydropteroyltri-L-glutamate site. Asp-577 provides a ligand contact to L-homocysteine. Asp-577 contacts L-methionine. Glu-583 contributes to the 5-methyltetrahydropteroyltri-L-glutamate binding site. Zn(2+) contacts are provided by His-618, Cys-620, and Glu-642. The active-site Proton donor is the His-672. Cys-704 provides a ligand contact to Zn(2+).

This sequence belongs to the vitamin-B12 independent methionine synthase family. Requires Zn(2+) as cofactor.

The catalysed reaction is 5-methyltetrahydropteroyltri-L-glutamate + L-homocysteine = tetrahydropteroyltri-L-glutamate + L-methionine. Its pathway is amino-acid biosynthesis; L-methionine biosynthesis via de novo pathway; L-methionine from L-homocysteine (MetE route): step 1/1. Functionally, catalyzes the transfer of a methyl group from 5-methyltetrahydrofolate to homocysteine resulting in methionine formation. The sequence is that of 5-methyltetrahydropteroyltriglutamate--homocysteine methyltransferase from Thermotoga maritima (strain ATCC 43589 / DSM 3109 / JCM 10099 / NBRC 100826 / MSB8).